A 543-amino-acid polypeptide reads, in one-letter code: MASHQSEKEKPQSCTTEVQVSHVTGLKLGLVVTSVTLVVFLMLLDMSIIVTAIPHITAQFHSLGDVGWYGSAYLLSSCALQPLAGKLYTLLTLKYTFLAFLGVFEVGSALCGAARCSTMLIVGRAVAGMGGSGLTNGAITILASAAPKQQQPLLIGIMMGLSQIAIVCGPLLGGAFTQHASWRWCFYINLPVGALAAILLLAIHIPKSVPTSDCTMPAPRAVGVRVILSQLDLLGFVLFAAFAVMISLALEWGGSDYMWDSSVIIGLFCGAGISLVVFGFWERYVGNSMAMIPFSVASRRQVWCSCLFLGFFSGALLTFSYYLPIYFQAVKDVSPTMSGVYMLPGIGGQIVMAIVSGAIIGKTGYYIPWALASGIIVSISAGLVSTFQPHTSIAAWVMYQFMGGFGRGCGMQTPIIAIQHALPPQMSALGISLAMFGQTFGGSLFLTLAKLVFSAGLDAGLREYAPAVSAEAVTAAGATGFRDVVPANLLSQVLLAYCKGIDHTFYLAVGASGATFLFAWGMGQVGLIWWGEERTGFGRDERV.

13 consecutive transmembrane segments (helical) span residues 30-50, 90-110, 125-145, 153-173, 185-205, 233-253, 261-281, 307-327, 340-360, 364-384, 394-416, 428-448, and 509-529; these read LVVT…SIIV, LLTL…GSAL, AVAG…LASA, LLIG…PLLG, CFYI…AIHI, LLGF…LEWG, SSVI…FGFW, LFLG…PIYF, VYML…GAII, GYYI…AGLV, AAWV…TPII, ALGI…FLTL, and VGAS…GLIW.

This sequence belongs to the major facilitator superfamily. TCR/Tet family.

The protein resides in the membrane. Its function is as follows. Efflux pump; part of the gene cluster that mediates the biosynthesis of monakolin K, also known as lovastatin, and which acts as a potent competitive inhibitor of HMG-CoA reductase. This is Efflux pump mokI from Monascus pilosus (Red mold).